Reading from the N-terminus, the 908-residue chain is Vacuolar membrane protease (908 aa).

The segment at 1-25 (MTSGEEEEGTREQVPVSQPTGTTSI) is disordered. Residues 1–48 (MTSGEEEEGTREQVPVSQPTGTTSIVSTKEKQPNIFIRAIRATFGYRK) are Cytoplasmic-facing. Residues 15–25 (PVSQPTGTTSI) show a composition bias toward polar residues. Residues 49 to 69 (TSLTLFVLLTIFFTVAFSSYD) traverse the membrane as a helical segment. At 70 to 381 (NSLDFTIDLP…FSTSVTTLNT (312 aa)) the chain is on the vacuolar side. Asn143 and Asn162 each carry an N-linked (GlcNAc...) asparagine glycan. 2 residues coordinate Zn(2+): His176 and Asp188. Glu221 functions as the Proton acceptor in the catalytic mechanism. Zn(2+) is bound by residues Glu222, Glu247, and His319. N-linked (GlcNAc...) asparagine glycosylation occurs at Asn354. Residues 382 to 402 (INMVLIVLFPVLSGPLLFITV) form a helical membrane-spanning segment. Residues 403–411 (RYKKWNIGT) are Cytoplasmic-facing. Residues 412 to 432 (ANLFSLPLAIVITSLVGAVVV) form a helical membrane-spanning segment. The Vacuolar segment spans residues 433–449 (NQGFRLVNEFLPASRPM). A helical membrane pass occupies residues 450 to 470 (LLVTTTTSILLLTYYILLNGI). The Cytoplasmic portion of the chain corresponds to 471 to 480 (NFVSPSGDQK). The chain crosses the membrane as a helical span at residues 481–501 (LVSIIQISFIYWIALIFVTRG). Over 502-514 (LSQNAIGDDHTGE) the chain is Vacuolar. The helical transmembrane segment at 515-535 (FAFTILFLLEATASLFGLIGW) threads the bilayer. The Cytoplasmic segment spans residues 536–602 (TFTRSVKEPT…MQHFGYDWSL (67 aa)). The segment at 543–584 (EPTGDEEPLLNGRMERYVDGSDDEDDVEEEDDEDQSEEENHQ) is disordered. Over residues 562 to 579 (GSDDEDDVEEEDDEDQSE) the composition is skewed to acidic residues. Residues 603 to 623 (QFLLIVPISSLVIYNSGWLVI) traverse the membrane as a helical segment. At 624 to 638 (DGINKSIQESLVAEN) the chain is on the vacuolar side. N-linked (GlcNAc...) asparagine glycosylation occurs at Asn627. The chain crosses the membrane as a helical span at residues 639 to 659 (FIYLIIQLFSQFWILPILPFV). Residues 660–664 (YKLNR) lie on the Cytoplasmic side of the membrane. A helical transmembrane segment spans residues 665 to 685 (FMVLGLIAFALVGVTLISSVD). Residues 686–908 (PFNQDNPLKL…LVSLTNRIEV (223 aa)) lie on the Vacuolar side of the membrane. Residues Asn752 and Asn764 are each glycosylated (N-linked (GlcNAc...) asparagine).

This sequence belongs to the peptidase M28 family. It depends on Zn(2+) as a cofactor.

Its subcellular location is the vacuole membrane. Its function is as follows. May be involved in vacuolar sorting and osmoregulation. The protein is Vacuolar membrane protease of Candida tropicalis (strain ATCC MYA-3404 / T1) (Yeast).